The chain runs to 38 residues: Photosystem I reaction center subunit IX (38 aa).

Residues 4–24 (FLTTAPVVAAIWFTATAGILI) form a helical membrane-spanning segment.

The protein belongs to the PsaJ family.

It is found in the cellular thylakoid membrane. In terms of biological role, may help in the organization of the PsaE and PsaF subunits. The protein is Photosystem I reaction center subunit IX of Synechococcus sp. (strain CC9902).